A 769-amino-acid polypeptide reads, in one-letter code: 5-methyltetrahydropteroyltriglutamate--homocysteine methyltransferase (769 aa).

5-methyltetrahydropteroyltri-L-glutamate-binding positions include 16–19 (RELK) and lysine 121. A disordered region spans residues 415-450 (SMTERDSPHSSRSPLQREALDLPTLPTTTIGSFPQT). Residues 439–449 (LPTTTIGSFPQ) show a composition bias toward polar residues. Residues 444-446 (IGS) and glutamate 497 contribute to the L-homocysteine site. L-methionine is bound by residues 444 to 446 (IGS) and glutamate 497. Residues 528–529 (RC) and tryptophan 574 each bind 5-methyltetrahydropteroyltri-L-glutamate. Aspartate 612 is a binding site for L-homocysteine. An L-methionine-binding site is contributed by aspartate 612. Position 618 (glutamate 618) interacts with 5-methyltetrahydropteroyltri-L-glutamate. Residues histidine 654, cysteine 656, and glutamate 678 each contribute to the Zn(2+) site. Histidine 707 functions as the Proton donor in the catalytic mechanism. Position 739 (cysteine 739) interacts with Zn(2+).

This sequence belongs to the vitamin-B12 independent methionine synthase family. Zn(2+) serves as cofactor.

The catalysed reaction is 5-methyltetrahydropteroyltri-L-glutamate + L-homocysteine = tetrahydropteroyltri-L-glutamate + L-methionine. It participates in amino-acid biosynthesis; L-methionine biosynthesis via de novo pathway; L-methionine from L-homocysteine (MetE route): step 1/1. Functionally, catalyzes the transfer of a methyl group from 5-methyltetrahydrofolate to homocysteine resulting in methionine formation. This chain is 5-methyltetrahydropteroyltriglutamate--homocysteine methyltransferase, found in Salinibacter ruber (strain DSM 13855 / M31).